Here is a 1239-residue protein sequence, read N- to C-terminus: WD repeat-containing protein 11 (1239 aa).

9 WD repeats span residues 63 to 112 (RHKA…AHCE), 115 to 158 (EHSK…KLWK), 358 to 398 (TKTV…SKSS), 476 to 515 (RMCP…LHKE), 571 to 610 (NDEP…LLRE), 713 to 750 (GSMG…SRGV), 752 to 792 (THRG…MVSS), 798 to 836 (NVNY…ASYR), and 898 to 944 (SLSN…IQAF). Residues 1213–1239 (EDLSQTEGTGTESSPADDTDNSLVNIE) form a disordered region. A compositionally biased stretch (polar residues) spans 1215 to 1226 (LSQTEGTGTESS).

As to quaternary structure, component of the complex WDR11.

It localises to the cytoplasm. Its subcellular location is the cytoskeleton. It is found in the cilium basal body. The protein resides in the nucleus. The protein localises to the cilium axoneme. It localises to the cytoplasmic vesicle. Its subcellular location is the golgi apparatus. It is found in the trans-Golgi network. In terms of biological role, involved in the Hedgehog (Hh) signaling pathway, is essential for normal ciliogenesis. Regulates the proteolytic processing of gli3 and cooperates with the transcription factor emx1 in the induction of downstream Hh pathway gene expression and gonadotropin-releasing hormone production. WDR11 complex facilitates the tethering of Adaptor protein-1 complex (AP-1)-derived vesicles. This is WD repeat-containing protein 11 (wdr11) from Danio rerio (Zebrafish).